Here is a 259-residue protein sequence, read N- to C-terminus: Type III pantothenate kinase (259 aa).

Position 9-16 (9-16 (DAGNSRIK)) interacts with ATP. Substrate contacts are provided by residues Y93 and 100–103 (GSDR). D102 (proton acceptor) is an active-site residue. T126 provides a ligand contact to ATP. T190 is a substrate binding site.

It belongs to the type III pantothenate kinase family. Homodimer. Requires NH4(+) as cofactor. The cofactor is K(+).

The protein resides in the cytoplasm. It carries out the reaction (R)-pantothenate + ATP = (R)-4'-phosphopantothenate + ADP + H(+). It participates in cofactor biosynthesis; coenzyme A biosynthesis; CoA from (R)-pantothenate: step 1/5. Catalyzes the phosphorylation of pantothenate (Pan), the first step in CoA biosynthesis. This is Type III pantothenate kinase from Burkholderia thailandensis (strain ATCC 700388 / DSM 13276 / CCUG 48851 / CIP 106301 / E264).